The sequence spans 465 residues: Ribulose bisphosphate carboxylase large chain (465 aa).

The residue at position 4 (Lys-4) is an N6,N6,N6-trimethyllysine. Residues Asn-113 and Thr-163 each coordinate substrate. Lys-165 functions as the Proton acceptor in the catalytic mechanism. Residue Lys-167 coordinates substrate. Mg(2+)-binding residues include Lys-191, Asp-193, and Glu-194. Lys-191 carries the N6-carboxylysine modification. Catalysis depends on His-284, which acts as the Proton acceptor. The substrate site is built by Arg-285, His-317, and Ser-369.

Belongs to the RuBisCO large chain family. Type I subfamily. Heterohexadecamer of 8 large chains and 8 small chains; disulfide-linked. The disulfide link is formed within the large subunit homodimers. Mg(2+) is required as a cofactor. The disulfide bond which can form in the large chain dimeric partners within the hexadecamer appears to be associated with oxidative stress and protein turnover.

It is found in the plastid. The protein resides in the chloroplast. It carries out the reaction 2 (2R)-3-phosphoglycerate + 2 H(+) = D-ribulose 1,5-bisphosphate + CO2 + H2O. The catalysed reaction is D-ribulose 1,5-bisphosphate + O2 = 2-phosphoglycolate + (2R)-3-phosphoglycerate + 2 H(+). RuBisCO catalyzes two reactions: the carboxylation of D-ribulose 1,5-bisphosphate, the primary event in carbon dioxide fixation, as well as the oxidative fragmentation of the pentose substrate in the photorespiration process. Both reactions occur simultaneously and in competition at the same active site. This is Ribulose bisphosphate carboxylase large chain from Idesia polycarpa (Iigiri tree).